The primary structure comprises 140 residues: MPLPEPSEQEGESVKAGQEPSSKPGTEVVPAAPRKPREFSKLVLLTASKDSTKVAGAKRKGVHCVMSLGVPGPATLAKALLQTHPEAQRAIEAAPQEPEQKRSRQDPGADRTEDSGLAAGPPEAAGENSAPCSVAPGKSL.

Disordered stretches follow at residues 1–39 (MPLP…PREF) and 83–140 (THPE…GKSL). Ser21 bears the Phosphoserine mark. Basic and acidic residues predominate over residues 98–114 (PEQKRSRQDPGADRTED). Residues 118 to 127 (AAGPPEAAGE) are compositionally biased toward low complexity.

This chain is FLYWCH family member 2 (FLYWCH2), found in Pongo abelii (Sumatran orangutan).